The primary structure comprises 261 residues: Probable electron transfer flavoprotein subunit beta (261 aa).

Position 2 is an N-acetylserine (S2).

It belongs to the ETF beta-subunit/FixA family. As to quaternary structure, heterodimer of an alpha and a beta subunit. Interacts with YFH1. It depends on FAD as a cofactor. The cofactor is AMP.

It localises to the mitochondrion matrix. Its function is as follows. The electron transfer flavoprotein serves as a specific electron acceptor for several dehydrogenases, including five acyl-CoA dehydrogenases, glutaryl-CoA and sarcosine dehydrogenase. It transfers the electrons to the main mitochondrial respiratory chain via ETF-ubiquinone oxidoreductase (ETF dehydrogenase). The polypeptide is Probable electron transfer flavoprotein subunit beta (CIR1) (Saccharomyces cerevisiae (strain ATCC 204508 / S288c) (Baker's yeast)).